Reading from the N-terminus, the 95-residue chain is FXYD domain-containing ion transport regulator 6 (95 aa).

An N-terminal signal peptide occupies residues 1 to 18 (MELVLVFLCSLLAPMVLA). Over 19–35 (STAEKEKEMDPFHYDYQ) the chain is Extracellular. The chain crosses the membrane as a helical span at residues 36-58 (TLRIGGLVFAVVLFSVGILLILS). The Cytoplasmic segment spans residues 59–95 (RRCKCSFNQKPRAPGDEEAQVENLITANATEPQKAEN).

Belongs to the FXYD family. As to quaternary structure, regulatory subunit of the sodium/potassium-transporting ATPase which is composed of a catalytic alpha subunit, a non-catalytic beta subunit and an additional regulatory subunit. The regulatory subunit, a member of the FXYD protein family, modulates the enzymatic activity in a tissue- and isoform-specific way by changing affinities of the Na+/K+-ATPase toward Na(+), K(+) or ATP.

Its subcellular location is the cell membrane. Its function is as follows. Associates with and regulates the activity of the sodium/potassium-transporting ATPase (NKA) which catalyzes the hydrolysis of ATP coupled with the exchange of Na(+) and K(+) ions across the plasma membrane. Reduces the apparent affinity for intracellular Na(+) with no change in the apparent affinity for extracellular K(+). In addition to modulating NKA kinetics, may also function as a regulator of NKA localization to the plasma membrane. The polypeptide is FXYD domain-containing ion transport regulator 6 (FXYD6) (Macaca fascicularis (Crab-eating macaque)).